The chain runs to 181 residues: KYPYIAGMGVYIFKKEILLNLLRWRFPTANDFGSEIIPAAAREINVKAYLFNDYWEDIGTIKSFFEANLALAEQPSKFSFYDASKPMYTSRRNLPPSMISGSKITDSIISHGCFLDKCRVEHSVVGIRSRIGSNVHLKDTVMLGADFYETDAERGDQLAEGKVPIGIGENTSIQNCIIDMN.

This sequence belongs to the bacterial/plant glucose-1-phosphate adenylyltransferase family. Heterotetramer. As to expression, leaves.

The protein localises to the plastid. It is found in the chloroplast. It localises to the amyloplast. It carries out the reaction alpha-D-glucose 1-phosphate + ATP + H(+) = ADP-alpha-D-glucose + diphosphate. It participates in glycan biosynthesis; starch biosynthesis. Highly active without 3'phosphoglycerate, and is only slightly affected by the activator 3'phosphoglycerate and inhibitor orthophosphate. This protein plays a role in synthesis of starch. It catalyzes the synthesis of the activated glycosyl donor, ADP-glucose from Glc-1-P and ATP. This chain is Glucose-1-phosphate adenylyltransferase large subunit 2, found in Hordeum vulgare (Barley).